The primary structure comprises 436 residues: Two-pore potassium channel 3 (436 aa).

Topologically, residues 1-148 are cytoplasmic; that stretch reads MANEGSDPLL…QKDPTETSRS (148 aa). The interval 62–117 is disordered; it reads SHFIDSMKQPSPSSSSTAVNNPFSDSSTLDPLLPPPPPQPEPWLSDQTSSHCQGHA. A compositionally biased stretch (low complexity) spans 71–92; it reads PSPSSSSTAVNNPFSDSSTLDP. Over residues 93–102 the composition is skewed to pro residues; it reads LLPPPPPQPE. Residues 149–169 form a helical membrane-spanning segment; the sequence is VVRQAFALLVVYLSLGVLIYW. Residues 185-204 constitute an intramembrane region (pore-forming); sequence DGLYFCIVTMCTIGYGDITP. A helical transmembrane segment spans residues 212 to 232; that stretch reads FSIMFVLVGFGFIDILLSGMV. The Cytoplasmic segment spans residues 233–274; that stretch reads SYVLDLQESYMLDSAKRRDEPEKRRSYIIDVKKGRMRIRLKV. Residues 275 to 295 form a helical membrane-spanning segment; it reads ALALGVVVLCIAVGVGIMHFI. Positions 302-321 form an intramembrane region, pore-forming; that stretch reads DSFYLSVMSVTTVGYGDRAF. A helical transmembrane segment spans residues 328 to 348; that stretch reads LFAAIWLLVSTLAVARAFLYL. Topologically, residues 349 to 436 are cytoplasmic; that stretch reads AEARVDKRNR…LDLLEGGSGD (88 aa). 2 EF-hand domains span residues 365–400 and 404–436; these read LCET…EMEK and KDIL…GSGD. Asp-378, Asp-380, Asn-382, Cys-384, Glu-389, Asp-417, Asn-421, Lys-423, and Asp-428 together coordinate Ca(2+).

This sequence belongs to the two pore domain potassium channel (TC 1.A.1.7) family. As to quaternary structure, homodimer. As to expression, expressed in roots, cotyledons, stems, hypocotyls, leaves and flowers. Detected in root tips and in mesophyll cells and guard cells of the leaves.

The protein localises to the vacuole membrane. It localises to the plastid. The protein resides in the chloroplast thylakoid membrane. With respect to regulation, inhibited by barium, but not by tetraethylammonium. Two-pore potassium channel modulating the proton motive force (pmf) necessary to convert photochemical energy into physiological functions. Mediates the potassium efflux from the thylakoid lumen required for the regulation of the transmembrane electrical potential, the enhancement of the pH gradient for ATP synthesis, the regulation of electron flow, and pH-mediated photoprotective responses. Requires calcium for channel activity. This is Two-pore potassium channel 3 from Arabidopsis thaliana (Mouse-ear cress).